The following is a 195-amino-acid chain: Nicotinamide riboside kinase 1 (195 aa).

An ATP-binding site is contributed by 10 to 18 (GVTNGGKTT). Residues Thr17 and Asp36 each coordinate Mg(2+). Residue Asp36 is the Proton acceptor of the active site. Residues 36-39 (DDFF) and 55-56 (YD) each bind substrate. Arg128 contributes to the ATP binding site. Residues Arg129 and 134-135 (YE) each bind substrate. ATP contacts are provided by residues 132–134 (RVY) and 172–174 (RSE).

It belongs to the uridine kinase family. NRK subfamily. In terms of assembly, monomer.

The catalysed reaction is beta-nicotinamide D-riboside + ATP = beta-nicotinamide D-ribonucleotide + ADP + H(+). It carries out the reaction beta-D-ribosylnicotinate + ATP = nicotinate beta-D-ribonucleotide + ADP + H(+). The protein operates within cofactor biosynthesis; NAD(+) biosynthesis. In terms of biological role, catalyzes the phosphorylation of nicotinamide riboside (NR) and nicotinic acid riboside (NaR) to form nicotinamide mononucleotide (NMN) and nicotinic acid mononucleotide (NaMN). This Rattus norvegicus (Rat) protein is Nicotinamide riboside kinase 1 (Nmrk1).